A 111-amino-acid polypeptide reads, in one-letter code: Small ribosomal subunit protein bS6 (111 aa).

It belongs to the bacterial ribosomal protein bS6 family.

In terms of biological role, binds together with bS18 to 16S ribosomal RNA. The sequence is that of Small ribosomal subunit protein bS6 from Francisella philomiragia subsp. philomiragia (strain ATCC 25017 / CCUG 19701 / FSC 153 / O#319-036).